Here is a 473-residue protein sequence, read N- to C-terminus: Adenosylhomocysteinase (473 aa).

Residues 58–62 (HMTIQ), D135, and E197 contribute to the substrate site. 198–200 (TTT) is an NAD(+) binding site. Residues K227 and D231 each contribute to the substrate site. Residues N232, V265, E284, N319, 340–342 (IGH), and N385 contribute to the NAD(+) site. H342 provides a ligand contact to substrate. Substrate is bound at residue H392. K467 and Y471 together coordinate NAD(+).

This sequence belongs to the adenosylhomocysteinase family. As to quaternary structure, homotetramer; dimer of dimers. NAD(+) is required as a cofactor.

Its subcellular location is the cytoplasm. The enzyme catalyses S-adenosyl-L-homocysteine + H2O = L-homocysteine + adenosine. It participates in amino-acid biosynthesis; L-homocysteine biosynthesis; L-homocysteine from S-adenosyl-L-homocysteine: step 1/1. Its function is as follows. May play a key role in the regulation of the intracellular concentration of adenosylhomocysteine, which is a strong inhibitor of SAM-dependent methyltransferases. Catalyzes the hydrolysis of S-adenosyl-L-homocysteine into L-homocysteine and adenosine. This chain is Adenosylhomocysteinase, found in Bradyrhizobium elkanii.